A 336-amino-acid chain; its full sequence is Probable G-protein coupled receptor 160 (336 aa).

Over 1-20 the chain is Extracellular; the sequence is MTALSSKNCSLQYQLHQSPQ. Asn8 is a glycosylation site (N-linked (GlcNAc...) asparagine). The chain crosses the membrane as a helical span at residues 21 to 41; sequence LLEASCLLFLIILGKVLLNIL. Over 42 to 56 the chain is Cytoplasmic; it reads LLRVRRGDARWTLME. Residues 57–77 traverse the membrane as a helical segment; sequence YFCFSLALVDLLLLVNISILT. The Extracellular segment spans residues 78–95; the sequence is YFRDFVVLGIRFTRYHIC. Residues 96 to 116 form a helical membrane-spanning segment; it reads LLTQIISFTYGFLHYPVCSLA. The Cytoplasmic portion of the chain corresponds to 117 to 136; sequence CIDYWCNLSRASKQSSRWQK. Residues 137 to 157 traverse the membrane as a helical segment; it reads LLYFLTVILTWISVLAYVLVD. At 158-186 the chain is on the extracellular side; it reads PAISVSLKAHRGYVYQCPAYVSTQSHWLS. Residues 187 to 207 traverse the membrane as a helical segment; that stretch reads LSMLMVLFVAFLISWQEVVAL. The Cytoplasmic segment spans residues 208–243; that stretch reads LQAMRIASYKSKAALYFPFPLHCGYALSCREALLPR. A helical transmembrane segment spans residues 244–264; sequence LIVCFLGTWFPFVALQVLILS. The Extracellular portion of the chain corresponds to 265 to 272; sequence LRVQIPAY. A helical transmembrane segment spans residues 273–293; that stretch reads IEMNVPWLYFVNSFLIAAVYW. The Cytoplasmic portion of the chain corresponds to 294–336; the sequence is FNCHKLDLRDSSLPVDPFINWKCCFVPVHRLKQVERPMSIVIC.

The protein belongs to the G-protein coupled receptor 1 family.

The protein resides in the cell membrane. Functionally, orphan receptor. This is Probable G-protein coupled receptor 160 (Gpr160) from Mus musculus (Mouse).